The following is a 186-amino-acid chain: Inosine/xanthosine triphosphatase (186 aa).

Residue glutamine 75 participates in Mg(2+) binding.

This sequence belongs to the YjjX NTPase family. As to quaternary structure, homodimer. Mg(2+) serves as cofactor. Requires Mn(2+) as cofactor.

It carries out the reaction XTP + H2O = XDP + phosphate + H(+). The enzyme catalyses ITP + H2O = IDP + phosphate + H(+). In terms of biological role, phosphatase that hydrolyzes non-canonical purine nucleotides such as XTP and ITP to their respective diphosphate derivatives. Probably excludes non-canonical purines from DNA/RNA precursor pool, thus preventing their incorporation into DNA/RNA and avoiding chromosomal lesions. This is Inosine/xanthosine triphosphatase from Shewanella baltica (strain OS195).